A 390-amino-acid polypeptide reads, in one-letter code: Chalcone synthase (390 aa).

The active site involves C164.

Belongs to the thiolase-like superfamily. Chalcone/stilbene synthases family.

It catalyses the reaction (E)-4-coumaroyl-CoA + 3 malonyl-CoA + 3 H(+) = 2',4,4',6'-tetrahydroxychalcone + 3 CO2 + 4 CoA. Its pathway is secondary metabolite biosynthesis; flavonoid biosynthesis. Its function is as follows. The primary product of this enzyme is 4,2',4',6'-tetrahydroxychalcone (also termed naringenin-chalcone or chalcone) which undergoes enzyme-catalyzed or spontaneous isomerization into naringenin. This Hypericum androsaemum (Tutsan) protein is Chalcone synthase.